Here is a 268-residue protein sequence, read N- to C-terminus: Enoyl-[acyl-carrier-protein] reductase [NADH] (268 aa).

NAD(+) is bound by residues 20–21 (SI), 64–65 (DV), and 95–96 (IA). Tyrosine 157 contributes to the substrate binding site. Residues lysine 164 and isoleucine 193 each coordinate NAD(+).

It belongs to the short-chain dehydrogenases/reductases (SDR) family. FabI subfamily. In terms of assembly, homodimer. Homotetramer.

The enzyme catalyses a 2,3-saturated acyl-[ACP] + NAD(+) = a (2E)-enoyl-[ACP] + NADH + H(+). It catalyses the reaction a 2,3-saturated acyl-CoA + NAD(+) = a (2E)-enoyl-CoA + NADH + H(+). Its pathway is lipid metabolism; mycolic acid biosynthesis. In terms of biological role, enoyl-ACP reductase of the type II fatty acid syntase (FAS-II) system, which is involved in the biosynthesis of mycolic acids, a major component of mycobacterial cell walls. Catalyzes the NADH-dependent reduction of the double bond of 2-trans-enoyl-[acyl-carrier protein], an essential step in the fatty acid elongation cycle of the FAS-II pathway. Shows preference for long-chain fatty acyl thioester substrates, and can also use 2-trans-enoyl-CoAs as alternative substrates. The mycobacterial FAS-II system utilizes the products of the FAS-I system as primers to extend fatty acyl chain lengths up to C56, forming the meromycolate chain that serves as the precursor for final mycolic acids. The chain is Enoyl-[acyl-carrier-protein] reductase [NADH] from Mycobacterium avium.